A 315-amino-acid polypeptide reads, in one-letter code: DNA-directed RNA polymerase subunit alpha (315 aa).

An alpha N-terminal domain (alpha-NTD) region spans residues 1-228 (MLEIEKPKIE…EHLRLFIGLT (228 aa)). Residues 245–315 (KDKILEMTIE…LGLGFRKADD (71 aa)) form an alpha C-terminal domain (alpha-CTD) region.

Belongs to the RNA polymerase alpha chain family. As to quaternary structure, homodimer. The RNAP catalytic core consists of 2 alpha, 1 beta, 1 beta' and 1 omega subunit. When a sigma factor is associated with the core the holoenzyme is formed, which can initiate transcription.

It carries out the reaction RNA(n) + a ribonucleoside 5'-triphosphate = RNA(n+1) + diphosphate. Functionally, DNA-dependent RNA polymerase catalyzes the transcription of DNA into RNA using the four ribonucleoside triphosphates as substrates. The chain is DNA-directed RNA polymerase subunit alpha from Desulfitobacterium hafniense (strain DSM 10664 / DCB-2).